Reading from the N-terminus, the 106-residue chain is uncharacterized protein (106 aa).

Disordered regions lie at residues 33–64 (FKTSTRSTGKKRSKGSTSQDGKKQESLESRND) and 87–106 (NLTGLESGGSSPPFSLAVSK). Residues 52–63 (DGKKQESLESRN) are compositionally biased toward basic and acidic residues. A compositionally biased stretch (polar residues) spans 87–99 (NLTGLESGGSSPP).

Its subcellular location is the mitochondrion. This is an uncharacterized protein from Arabidopsis thaliana (Mouse-ear cress).